The following is a 97-amino-acid chain: Large ribosomal subunit protein eL21 (97 aa).

Residues 1-26 form a disordered region; the sequence is MQKSEGFRSKTRYKLQKHPRQKGMAP. Basic residues predominate over residues 9–21; it reads SKTRYKLQKHPRQ.

The protein belongs to the eukaryotic ribosomal protein eL21 family.

The protein is Large ribosomal subunit protein eL21 of Methanococcus maripaludis (strain C6 / ATCC BAA-1332).